Here is a 293-residue protein sequence, read N- to C-terminus: NAD-dependent protein deacetylase (293 aa).

The region spanning 5–282 (PAHDHHTLQD…LHAPPHLPRA (278 aa)) is the Deacetylase sirtuin-type domain. Residues 27-47 (GAGC…GGWK) and 105-108 (QNVD) each bind NAD(+). His-123 serves as the catalytic Proton acceptor. Cys-131, Cys-134, Cys-182, and Cys-185 together coordinate Zn(2+). NAD(+) contacts are provided by residues 222-224 (GSS), 248-250 (NFG), and Cys-266.

It belongs to the sirtuin family. Class II subfamily. The cofactor is Zn(2+).

The protein localises to the cytoplasm. It carries out the reaction N(6)-acetyl-L-lysyl-[protein] + NAD(+) + H2O = 2''-O-acetyl-ADP-D-ribose + nicotinamide + L-lysyl-[protein]. In terms of biological role, NAD-dependent protein deacetylase which modulates the activities of several enzymes which are inactive in their acetylated form. This chain is NAD-dependent protein deacetylase, found in Xanthomonas axonopodis pv. citri (strain 306).